The following is a 145-amino-acid chain: 3-hydroxyacyl-[acyl-carrier-protein] dehydratase FabZ (145 aa).

Residue His-49 is part of the active site.

It belongs to the thioester dehydratase family. FabZ subfamily.

It is found in the cytoplasm. It catalyses the reaction a (3R)-hydroxyacyl-[ACP] = a (2E)-enoyl-[ACP] + H2O. In terms of biological role, involved in unsaturated fatty acids biosynthesis. Catalyzes the dehydration of short chain beta-hydroxyacyl-ACPs and long chain saturated and unsaturated beta-hydroxyacyl-ACPs. The polypeptide is 3-hydroxyacyl-[acyl-carrier-protein] dehydratase FabZ (Anaplasma phagocytophilum (strain HZ)).